We begin with the raw amino-acid sequence, 1073 residues long: Carbamoyl phosphate synthase large chain (1073 aa).

The interval 1–403 is carboxyphosphate synthetic domain; that stretch reads MPKRTDIKSI…SLQKALRGLE (403 aa). ATP is bound by residues arginine 129, arginine 169, glycine 175, glycine 176, glutamate 208, leucine 210, glutamate 215, glycine 241, valine 242, histidine 243, glutamine 285, and glutamate 299. The region spanning 133–328 is the ATP-grasp 1 domain; sequence DKAMKDIGLE…IAKIAAKLAI (196 aa). Residues glutamine 285, glutamate 299, and asparagine 301 each coordinate Mg(2+). 3 residues coordinate Mn(2+): glutamine 285, glutamate 299, and asparagine 301. The segment at 404-553 is oligomerization domain; that stretch reads VGACGLDPKV…YSTYEEECEA (150 aa). A carbamoyl phosphate synthetic domain region spans residues 554 to 935; sequence NPSTRDKIMI…AFAKAQMGAS (382 aa). An ATP-grasp 2 domain is found at 678-869; the sequence is QQMVQRLSLL…LAMIAARVMA (192 aa). ATP is bound by residues arginine 714, histidine 753, leucine 755, glutamate 760, glycine 785, valine 786, histidine 787, serine 788, glutamine 828, and glutamate 840. The Mg(2+) site is built by glutamine 828, glutamate 840, and asparagine 842. The Mn(2+) site is built by glutamine 828, glutamate 840, and asparagine 842. Residues 936–1073 form the MGS-like domain; the sequence is EVLPTGGTAF…LQDLHAGLKA (138 aa). An allosteric domain region spans residues 936-1073; the sequence is EVLPTGGTAF…LQDLHAGLKA (138 aa).

Belongs to the CarB family. Composed of two chains; the small (or glutamine) chain promotes the hydrolysis of glutamine to ammonia, which is used by the large (or ammonia) chain to synthesize carbamoyl phosphate. Tetramer of heterodimers (alpha,beta)4. Requires Mg(2+) as cofactor. Mn(2+) is required as a cofactor.

The catalysed reaction is hydrogencarbonate + L-glutamine + 2 ATP + H2O = carbamoyl phosphate + L-glutamate + 2 ADP + phosphate + 2 H(+). The enzyme catalyses hydrogencarbonate + NH4(+) + 2 ATP = carbamoyl phosphate + 2 ADP + phosphate + 2 H(+). It functions in the pathway amino-acid biosynthesis; L-arginine biosynthesis; carbamoyl phosphate from bicarbonate: step 1/1. It participates in pyrimidine metabolism; UMP biosynthesis via de novo pathway; (S)-dihydroorotate from bicarbonate: step 1/3. Functionally, large subunit of the glutamine-dependent carbamoyl phosphate synthetase (CPSase). CPSase catalyzes the formation of carbamoyl phosphate from the ammonia moiety of glutamine, carbonate, and phosphate donated by ATP, constituting the first step of 2 biosynthetic pathways, one leading to arginine and/or urea and the other to pyrimidine nucleotides. The large subunit (synthetase) binds the substrates ammonia (free or transferred from glutamine from the small subunit), hydrogencarbonate and ATP and carries out an ATP-coupled ligase reaction, activating hydrogencarbonate by forming carboxy phosphate which reacts with ammonia to form carbamoyl phosphate. The sequence is that of Carbamoyl phosphate synthase large chain from Pseudomonas putida (strain ATCC 47054 / DSM 6125 / CFBP 8728 / NCIMB 11950 / KT2440).